Consider the following 570-residue polypeptide: MKMSNMLISTLREVPAEAEIDSHKLMLRAGMIRKMAAGVYNYMPLGLKVLKKVEDIIREEMNAAGAQEFLASAIIPAELWQESGRWDAYGAEMFRLKDRGDRDFCLGPTHEEVFTDIARNEIKSYKQLPLNLYQIQTKYRDERRPRFGVMRSREFVMKDAYSFDKDQGGLDLAYDKMHDAYVKIFNRCGLDAKCVAADSGAIGGSNSAEFMVKSEVGEDDVVFCSECNYAANIEKASSPAEKELKQEFKEINKVETPNTKTIDELVKFFGTNEKKFAKTILFNADGKIVAVMVRGDREINEVKVSNAIGEVINLELASSEDVKKATGAEIGFAGPIGIKVDMLLVDEEVANMYNFIVGANETGYHINNVNYGRDFEGVIGDYRNVTEGEKCPVCGGKVTIARGTEVGHIFKLGTKYSEAMNAKFIDEDGKEKPFIMGCYGIGVTRTMASIIEQHHDENGIVWPLSVAPYHVSVIPVNVKDEEQARIANEIYEKLTSAGIEALLDDRNERAGVKFKDSELMGIPMRITVGKKINDGEIEFKLRDGEMEVIKIEDVYNIIKGEFEKNKIKLK.

This sequence belongs to the class-II aminoacyl-tRNA synthetase family. ProS type 1 subfamily. In terms of assembly, homodimer.

It localises to the cytoplasm. It carries out the reaction tRNA(Pro) + L-proline + ATP = L-prolyl-tRNA(Pro) + AMP + diphosphate. Functionally, catalyzes the attachment of proline to tRNA(Pro) in a two-step reaction: proline is first activated by ATP to form Pro-AMP and then transferred to the acceptor end of tRNA(Pro). As ProRS can inadvertently accommodate and process non-cognate amino acids such as alanine and cysteine, to avoid such errors it has two additional distinct editing activities against alanine. One activity is designated as 'pretransfer' editing and involves the tRNA(Pro)-independent hydrolysis of activated Ala-AMP. The other activity is designated 'posttransfer' editing and involves deacylation of mischarged Ala-tRNA(Pro). The misacylated Cys-tRNA(Pro) is not edited by ProRS. In Clostridium beijerinckii (strain ATCC 51743 / NCIMB 8052) (Clostridium acetobutylicum), this protein is Proline--tRNA ligase.